The following is a 333-amino-acid chain: Ribosomal RNA small subunit methyltransferase H (333 aa).

Residues G42 to H44, D62, F86, D105, and Q112 contribute to the S-adenosyl-L-methionine site.

Belongs to the methyltransferase superfamily. RsmH family.

It is found in the cytoplasm. It catalyses the reaction cytidine(1402) in 16S rRNA + S-adenosyl-L-methionine = N(4)-methylcytidine(1402) in 16S rRNA + S-adenosyl-L-homocysteine + H(+). Its function is as follows. Specifically methylates the N4 position of cytidine in position 1402 (C1402) of 16S rRNA. The sequence is that of Ribosomal RNA small subunit methyltransferase H from Cupriavidus necator (strain ATCC 17699 / DSM 428 / KCTC 22496 / NCIMB 10442 / H16 / Stanier 337) (Ralstonia eutropha).